The chain runs to 88 residues: Small ribosomal subunit protein bS20 (88 aa).

A disordered region spans residues 1–28; that stretch reads MANTVQARKRARQAVKQNEHNSSLRSKL.

This sequence belongs to the bacterial ribosomal protein bS20 family.

Binds directly to 16S ribosomal RNA. The sequence is that of Small ribosomal subunit protein bS20 from Polynucleobacter necessarius subsp. necessarius (strain STIR1).